The chain runs to 215 residues: Adenylate kinase (215 aa).

10-15 is an ATP binding site; sequence GAGKGT. The tract at residues 30–59 is NMP; it reads STGDMLRAAVKAGTELGLKAKSVMDAGNLV. AMP-binding positions include Thr31, Arg36, 57-59, 85-88, and Gln92; these read NLV and GFPR. Residues 122 to 159 form an LID region; the sequence is GRRVHEGSGRIYHTIFNPPKVEGVDDVTGESLVQRKDD. Residues Arg123 and 132-133 each bind ATP; that span reads IY. Arg156 and Arg167 together coordinate AMP. Residue Gly201 coordinates ATP.

The protein belongs to the adenylate kinase family. Monomer.

The protein resides in the cytoplasm. It carries out the reaction AMP + ATP = 2 ADP. Its pathway is purine metabolism; AMP biosynthesis via salvage pathway; AMP from ADP: step 1/1. Functionally, catalyzes the reversible transfer of the terminal phosphate group between ATP and AMP. Plays an important role in cellular energy homeostasis and in adenine nucleotide metabolism. The sequence is that of Adenylate kinase from Pseudomonas syringae pv. tomato (strain ATCC BAA-871 / DC3000).